Reading from the N-terminus, the 256-residue chain is Floral homeotic protein APETALA 1-2 (256 aa).

The region spanning 1-61 (MGRGRVQLKR…GKLFEYSTDS (61 aa)) is the MADS-box domain. In terms of domain architecture, K-box spans 88 to 178 (NTNWSMEYNR…SKQIKERENV (91 aa)). Residues 187–206 (DEQNHGHNMPPPPPPQQHQI) form a disordered region.

Homodimer capable of binding to CArG-box sequences.

The protein localises to the nucleus. In terms of biological role, transcription factor that promotes early floral meristem identity in synergy with LEAFY. Displays a redundant function with CAULIFLOWER in the up-regulation of LEAFY. Required subsequently for the transition of an inflorescence meristem into a floral meristem, and for the normal development of sepals and petals in flowers. Regulates positively B class homeotic proteins. The protein is Floral homeotic protein APETALA 1-2 (2AP1) of Brassica oleracea var. italica (Broccoli).